The sequence spans 208 residues: V-type ATP synthase subunit D (208 aa).

The protein belongs to the V-ATPase D subunit family.

In terms of biological role, produces ATP from ADP in the presence of a proton gradient across the membrane. The chain is V-type ATP synthase subunit D from Chlamydia abortus (strain DSM 27085 / S26/3) (Chlamydophila abortus).